Reading from the N-terminus, the 27-residue chain is Ganodermin (27 aa).

Its function is as follows. Has antifungal activity against B.cinera, F.oxysporum and P.piricola with IC(50) values of 15.2 uM, 12.4 uM and 18.1 uM, respectively. Lacks hemagglutinating activity towards rabbit erythrocytes. Lacks deoxyribonuclease, ribonuclease and protease inhibitory activities. This chain is Ganodermin, found in Ganoderma lucidum (Ling zhi medicinal fungus).